The chain runs to 969 residues: RNA polymerase-associated protein RapA (969 aa).

The Helicase ATP-binding domain maps to 164-334 (EVGRRYAPRV…FARLRLLDPD (171 aa)). Position 177–184 (177–184 (DEVGLGKT)) interacts with ATP. The DEAH box motif lies at 280–283 (DEAH). A Helicase C-terminal domain is found at 492–668 (RVNWLLELLK…GKSDGLESLI (177 aa)).

Belongs to the SNF2/RAD54 helicase family. RapA subfamily. In terms of assembly, interacts with the RNAP. Has a higher affinity for the core RNAP than for the holoenzyme. Its ATPase activity is stimulated by binding to RNAP.

Transcription regulator that activates transcription by stimulating RNA polymerase (RNAP) recycling in case of stress conditions such as supercoiled DNA or high salt concentrations. Probably acts by releasing the RNAP, when it is trapped or immobilized on tightly supercoiled DNA. Does not activate transcription on linear DNA. Probably not involved in DNA repair. This chain is RNA polymerase-associated protein RapA, found in Aliivibrio fischeri (strain MJ11) (Vibrio fischeri).